Consider the following 658-residue polypeptide: Sodium/nucleoside cotransporter 1 (658 aa).

Topologically, residues 1–75 (MEKASGRKSL…ARTFCQRHAS (75 aa)) are cytoplasmic. The helical transmembrane segment at 76-99 (LFKKILLGLLCLAYAAYFLAACIL) threads the bilayer. Topologically, residues 100-104 (DFQRA) are extracellular. A helical membrane pass occupies residues 105-123 (LALFVITCLVILVLLLHFL). Topologically, residues 124–142 (KKFLGKKLTRCLKPFKNSQ) are cytoplasmic. A helical membrane pass occupies residues 143–162 (LRLWIKRVFAGVSLVGLILW). Topologically, residues 163-173 (LALDTAQRPEQ) are extracellular. Residues 174 to 190 (LISFAGICMFVLILFAC) traverse the membrane as a helical segment. Residues 191-196 (SKHHSA) are Cytoplasmic-facing. Residues 197-217 (VSWRTVFWGLGLQFVFGLLVI) form a helical membrane-spanning segment. The Extracellular portion of the chain corresponds to 218–256 (RTDPGFIAFQWLGDQVQIFLAYTVAGSSFVLGDTLVNDV). A helical membrane pass occupies residues 257–278 (FAFQSLPIIIFFGCVMSILYYL). Residues 279 to 289 (GLVQWVVQKIA) are Cytoplasmic-facing. A helical transmembrane segment spans residues 290-313 (WFLQVTMRTTATETLAVAGNIFVG). Residues 314-332 (MTEAPLLIRPYLADLTLSE) lie on the Extracellular side of the membrane. Residues 333–355 (IHAVMTSGFATISGTVLGAFISF) form a helical membrane-spanning segment. Over 356 to 361 (GIDASS) the chain is Cytoplasmic. A helical membrane pass occupies residues 362 to 381 (LISASVMGAPCALALSKLVY). At 382–418 (PEEEESKFKSKEGVKLPRGKESNVLEAASNGATDAIA) the chain is on the extracellular side. The helical transmembrane segment at 419-441 (LVANVAANLVAFLAVLAFINAAL) threads the bilayer. Residues 442–452 (SWLGELVDIQG) are Cytoplasmic-facing. Residues 453-474 (LTFQVICSYILRPMVYMMGVEW) form a helical membrane-spanning segment. The Extracellular portion of the chain corresponds to 475–529 (TDCPMVAEMVGIKFFTNEFVAYQQLSQYKKKRLSGMEEWIDGQKQWISVRAEVIT). A helical membrane pass occupies residues 530–553 (TFSLCGFANLSSIGITLGGLTSMV). The Cytoplasmic portion of the chain corresponds to 554-564 (PHRKSDLSKVV). Residues 565–587 (IRALFTGSCVSFISACVAGILYV) traverse the membrane as a helical segment. Residues 588–658 (PRGAETDCVS…CGFYNNTVCA (71 aa)) are Extracellular-facing. Asparagine 653 is a glycosylation site (N-linked (GlcNAc...) asparagine).

This sequence belongs to the concentrative nucleoside transporter (CNT) (TC 2.A.41) family. In terms of processing, N-glycosylated. N-glycosylation is required for localization to the plasma membrane and the transporter activity.

It localises to the cell membrane. It is found in the apical cell membrane. It carries out the reaction uridine(out) + Na(+)(out) = uridine(in) + Na(+)(in). The enzyme catalyses thymidine(out) + Na(+)(out) = thymidine(in) + Na(+)(in). The catalysed reaction is cytidine(out) + Na(+)(out) = cytidine(in) + Na(+)(in). It catalyses the reaction adenosine(out) + Na(+)(out) = adenosine(in) + Na(+)(in). Due to its high apparent affinity but slow transport, adenosine could act as a negative regulator of pyrimidine transport under some conditions. Sodium and pyrimidine nucleoside symporter of the plasma membrane that imports uridine, thymidine and cytidine into cells by coupling their transport to the transmembrane sodium electrochemical gradient. Also transports adenosine, an atypical substrate transported with high apparent affinity, but low maximum velocity. Therefore, exhibits the transport characteristics of the nucleoside transport system cit or N2 subtype (N2/cit). Involved in renal nucleoside (re)absorption. This is Sodium/nucleoside cotransporter 1 (SLC28A1) from Oryctolagus cuniculus (Rabbit).